The following is a 427-amino-acid chain: GTPase ERA-like, chloroplastic (427 aa).

The N-terminal 39 residues, 1–39 (MAVSPHISPTLSRYKFFSTSVVENPNFSPYRIYSRRRVT), are a transit peptide targeting the chloroplast. Residues 128-298 (RSGYVAVVGM…KEWILSKLPF (171 aa)) enclose the Era-type G domain. The tract at residues 136–143 (GMPNVGKS) is G1. 136 to 143 (GMPNVGKS) is a GTP binding site. Positions 162–166 (QTTRH) are G2. The G3 stretch occupies residues 183-186 (DTPG). Residues 183–187 (DTPGV) and 248–251 (NKKD) contribute to the GTP site. The interval 248–251 (NKKD) is G4. The tract at residues 277-279 (VSA) is G5. The KH type-2 domain occupies 329–406 (YRNEVPYACQ…FLEVEVKVKE (78 aa)).

It belongs to the TRAFAC class TrmE-Era-EngA-EngB-Septin-like GTPase superfamily. Era GTPase family.

It is found in the plastid. It localises to the chloroplast stroma. The protein resides in the chloroplast nucleoid. Its function is as follows. Nuclear genome-encoded probable GTPase involved in ribosome biogenesis in chloroplasts. Plays a role in 16S rRNA maturation in plastids and may contribute to the assembly of the small (30S) ribosomal subunit. The polypeptide is GTPase ERA-like, chloroplastic (Arabidopsis thaliana (Mouse-ear cress)).